The sequence spans 379 residues: Queuine tRNA-ribosyltransferase (379 aa).

Aspartate 94 (proton acceptor) is an active-site residue. Substrate contacts are provided by residues aspartate 94–phenylalanine 98, aspartate 148, glutamine 191, and glycine 218. An RNA binding region spans residues glycine 249 to serine 255. Aspartate 268 (nucleophile) is an active-site residue. Residues threonine 273 to arginine 277 form an RNA binding; important for wobble base 34 recognition region. Positions 306, 308, 311, and 337 each coordinate Zn(2+).

Belongs to the queuine tRNA-ribosyltransferase family. Homodimer. Within each dimer, one monomer is responsible for RNA recognition and catalysis, while the other monomer binds to the replacement base PreQ1. The cofactor is Zn(2+).

It catalyses the reaction 7-aminomethyl-7-carbaguanine + guanosine(34) in tRNA = 7-aminomethyl-7-carbaguanosine(34) in tRNA + guanine. It functions in the pathway tRNA modification; tRNA-queuosine biosynthesis. In terms of biological role, catalyzes the base-exchange of a guanine (G) residue with the queuine precursor 7-aminomethyl-7-deazaguanine (PreQ1) at position 34 (anticodon wobble position) in tRNAs with GU(N) anticodons (tRNA-Asp, -Asn, -His and -Tyr). Catalysis occurs through a double-displacement mechanism. The nucleophile active site attacks the C1' of nucleotide 34 to detach the guanine base from the RNA, forming a covalent enzyme-RNA intermediate. The proton acceptor active site deprotonates the incoming PreQ1, allowing a nucleophilic attack on the C1' of the ribose to form the product. After dissociation, two additional enzymatic reactions on the tRNA convert PreQ1 to queuine (Q), resulting in the hypermodified nucleoside queuosine (7-(((4,5-cis-dihydroxy-2-cyclopenten-1-yl)amino)methyl)-7-deazaguanosine). The sequence is that of Queuine tRNA-ribosyltransferase from Bacillus cytotoxicus (strain DSM 22905 / CIP 110041 / 391-98 / NVH 391-98).